Consider the following 293-residue polypeptide: Small ribosomal subunit biogenesis GTPase RsgA (293 aa).

Residues 63 to 223 form the CP-type G domain; the sequence is KNELVRPPIA…VADTPGFSSL (161 aa). Residues 112–115 and 166–174 contribute to the GTP site; these read SKMD and GQSGVGKSS. Positions 247, 252, 254, and 260 each coordinate Zn(2+).

This sequence belongs to the TRAFAC class YlqF/YawG GTPase family. RsgA subfamily. Monomer. Associates with 30S ribosomal subunit, binds 16S rRNA. Zn(2+) is required as a cofactor.

It localises to the cytoplasm. One of several proteins that assist in the late maturation steps of the functional core of the 30S ribosomal subunit. Helps release RbfA from mature subunits. May play a role in the assembly of ribosomal proteins into the subunit. Circularly permuted GTPase that catalyzes slow GTP hydrolysis, GTPase activity is stimulated by the 30S ribosomal subunit. This chain is Small ribosomal subunit biogenesis GTPase RsgA, found in Bacillus anthracis.